The sequence spans 379 residues: Cytochrome b (379 aa).

4 consecutive transmembrane segments (helical) span residues 33–53 (FGSL…FLAM), 77–98 (WLIR…YLHI), 113–133 (WNIG…GYVL), and 178–198 (FFAF…LHLL). Residues His83 and His97 each coordinate heme b. His182 and His196 together coordinate heme b. His201 provides a ligand contact to a ubiquinone. 4 helical membrane passes run 226-246 (YKDL…ALFY), 288-308 (LGGV…PILH), 320-340 (ASQL…WIGG), and 347-367 (YIII…VLNP).

The protein belongs to the cytochrome b family. As to quaternary structure, the cytochrome bc1 complex contains 3 respiratory subunits (MT-CYB, CYC1 and UQCRFS1), 2 core proteins (UQCRC1 and UQCRC2) and probably 6 low-molecular weight proteins. Requires heme b as cofactor.

The protein localises to the mitochondrion inner membrane. Its function is as follows. Component of the ubiquinol-cytochrome c reductase complex (complex III or cytochrome b-c1 complex) that is part of the mitochondrial respiratory chain. The b-c1 complex mediates electron transfer from ubiquinol to cytochrome c. Contributes to the generation of a proton gradient across the mitochondrial membrane that is then used for ATP synthesis. The sequence is that of Cytochrome b (mt-cyb) from Anguilla anguilla (European freshwater eel).